Here is a 291-residue protein sequence, read N- to C-terminus: ATP synthase subunit a (291 aa).

Helical transmembrane passes span 50-70 (LDSMGWSIGLGVIFCLLFWIV), 108-128 (IAPLALTIFVWIFLMNLMDLI), 129-149 (PVDWIPQVAAFVGANVFGMDP), 161-181 (DPNITLGMSLSVFVLILFYSI), 203-223 (PVAKALLIPVNLILELVTFLA), 241-261 (LIFILIALLPFWIQWALSVPW), and 262-282 (AIFHILVITLQAFIFMMLTIV).

Belongs to the ATPase A chain family. In terms of assembly, F-type ATPases have 2 components, CF(1) - the catalytic core - and CF(0) - the membrane proton channel. CF(1) has five subunits: alpha(3), beta(3), gamma(1), delta(1), epsilon(1). CF(0) has three main subunits: a(1), b(2) and c(9-12). The alpha and beta chains form an alternating ring which encloses part of the gamma chain. CF(1) is attached to CF(0) by a central stalk formed by the gamma and epsilon chains, while a peripheral stalk is formed by the delta and b chains.

The protein resides in the cell inner membrane. Key component of the proton channel; it plays a direct role in the translocation of protons across the membrane. This chain is ATP synthase subunit a, found in Acinetobacter baumannii (strain AB307-0294).